Consider the following 176-residue polypeptide: Mediator of RNA polymerase II transcription subunit 11 (176 aa).

A disordered region spans residues 98-176; the sequence is SRVRELEETK…MGGDSSMSTN (79 aa). Residues 99 to 108 show a composition bias toward basic and acidic residues; it reads RVRELEETKA. Residues 124–154 are compositionally biased toward low complexity; that stretch reads HAAAQQQQQQQQQQQQQQQQMQQAAQQQQQQ.

Belongs to the Mediator complex subunit 11 family. In terms of assembly, component of the Mediator complex, which may include CDK8, MED4, MED6, MED11, MED14, MED17, MED18, MED20, MED21, MED22, MED27, MED28, MED30 and MED31.

It is found in the nucleus. Component of the Mediator complex, a coactivator involved in the regulated transcription of nearly all RNA polymerase II-dependent genes. Mediator functions as a bridge to convey information from gene-specific regulatory proteins to the basal RNA polymerase II transcription machinery. Mediator is recruited to promoters by direct interactions with regulatory proteins and serves as a scaffold for the assembly of a functional pre-initiation complex with RNA polymerase II and the general transcription factors. The chain is Mediator of RNA polymerase II transcription subunit 11 (MED11) from Drosophila melanogaster (Fruit fly).